The following is a 290-amino-acid chain: HTH-type transcriptional activator RhaR (290 aa).

The region spanning 179–277 (DLIMSALQQS…GMTPRDYRQR (99 aa)) is the HTH araC/xylS-type domain. DNA-binding regions (H-T-H motif) lie at residues 196 to 217 (ANFCHKNQLVERSLKQLFRQQT) and 244 to 267 (ISDIAARCGFEDSNYFSAVFTREA).

As to quaternary structure, binds DNA as a dimer.

Its subcellular location is the cytoplasm. Activates expression of the rhaSR operon in response to L-rhamnose. The polypeptide is HTH-type transcriptional activator RhaR (Yersinia pseudotuberculosis serotype O:3 (strain YPIII)).